Here is an 86-residue protein sequence, read N- to C-terminus: Exodeoxyribonuclease 7 small subunit (86 aa).

A disordered region spans residues 1 to 26 (MQDELFETEKAPQKNTKNAKNAPKKS).

Belongs to the XseB family. Heterooligomer composed of large and small subunits.

It localises to the cytoplasm. It catalyses the reaction Exonucleolytic cleavage in either 5'- to 3'- or 3'- to 5'-direction to yield nucleoside 5'-phosphates.. Its function is as follows. Bidirectionally degrades single-stranded DNA into large acid-insoluble oligonucleotides, which are then degraded further into small acid-soluble oligonucleotides. This Helicobacter pylori (strain HPAG1) protein is Exodeoxyribonuclease 7 small subunit.